A 420-amino-acid chain; its full sequence is UDP-N-acetylglucosamine 1-carboxyvinyltransferase 2 (420 aa).

22-23 serves as a coordination point for phosphoenolpyruvate; it reads KN. A UDP-N-acetyl-alpha-D-glucosamine-binding site is contributed by R92. C116 (proton donor) is an active-site residue. C116 carries the post-translational modification 2-(S-cysteinyl)pyruvic acid O-phosphothioketal. UDP-N-acetyl-alpha-D-glucosamine is bound by residues 121–125, D307, and I329; that span reads RPIDL.

Belongs to the EPSP synthase family. MurA subfamily.

The protein resides in the cytoplasm. The enzyme catalyses phosphoenolpyruvate + UDP-N-acetyl-alpha-D-glucosamine = UDP-N-acetyl-3-O-(1-carboxyvinyl)-alpha-D-glucosamine + phosphate. It participates in cell wall biogenesis; peptidoglycan biosynthesis. In terms of biological role, cell wall formation. Adds enolpyruvyl to UDP-N-acetylglucosamine. The sequence is that of UDP-N-acetylglucosamine 1-carboxyvinyltransferase 2 from Streptococcus thermophilus (strain ATCC BAA-250 / LMG 18311).